The chain runs to 423 residues: Serine--tRNA ligase (423 aa).

Residues 107–130 are disordered; sequence PHDSVPDGKSENDNREIRQWGAPP. Over residues 110–124 the composition is skewed to basic and acidic residues; that stretch reads SVPDGKSENDNREIR. L-serine is bound at residue 231–233; that stretch reads TGE. An ATP-binding site is contributed by 262–264; sequence RSE. E285 lines the L-serine pocket. 349–352 contributes to the ATP binding site; that stretch reads EISS. S385 contributes to the L-serine binding site.

It belongs to the class-II aminoacyl-tRNA synthetase family. Type-1 seryl-tRNA synthetase subfamily. Homodimer. The tRNA molecule binds across the dimer.

The protein localises to the cytoplasm. The catalysed reaction is tRNA(Ser) + L-serine + ATP = L-seryl-tRNA(Ser) + AMP + diphosphate + H(+). The enzyme catalyses tRNA(Sec) + L-serine + ATP = L-seryl-tRNA(Sec) + AMP + diphosphate + H(+). It participates in aminoacyl-tRNA biosynthesis; selenocysteinyl-tRNA(Sec) biosynthesis; L-seryl-tRNA(Sec) from L-serine and tRNA(Sec): step 1/1. Its function is as follows. Catalyzes the attachment of serine to tRNA(Ser). Is also able to aminoacylate tRNA(Sec) with serine, to form the misacylated tRNA L-seryl-tRNA(Sec), which will be further converted into selenocysteinyl-tRNA(Sec). The chain is Serine--tRNA ligase from Coxiella burnetii (strain Dugway 5J108-111).